A 417-amino-acid polypeptide reads, in one-letter code: Carboxypeptidase B (417 aa).

The first 16 residues, 1–16, serve as a signal peptide directing secretion; it reads MLAFLILVTVTLASAH. Positions 17-110 are cleaved as a propeptide — activation peptide; sequence HSGEHFEGDK…LEAQFDSRVR (94 aa). Residues 118-412 form the Peptidase M14 domain; it reads KYNNWETIEA…LAIKYVTSYV (295 aa). An intrachain disulfide couples cysteine 173 to cysteine 186. Residues histidine 176 and glutamate 179 each contribute to the Zn(2+) site. Substrate contacts are provided by residues 176–179, arginine 234, and 251–252; these read HARE and NR. 2 disulfide bridges follow: cysteine 245/cysteine 268 and cysteine 259/cysteine 273. Histidine 304 is a Zn(2+) binding site. Substrate is bound by residues 305–306 and tyrosine 356; that span reads SY. The active-site Proton donor/acceptor is glutamate 378.

This sequence belongs to the peptidase M14 family. Requires Zn(2+) as cofactor.

The protein resides in the secreted. Its subcellular location is the zymogen granule lumen. It catalyses the reaction Preferential release of a C-terminal lysine or arginine amino acid.. This is Carboxypeptidase B (CPB1) from Bos taurus (Bovine).